Here is a 475-residue protein sequence, read N- to C-terminus: Ribulose bisphosphate carboxylase large chain (475 aa).

Positions 1–2 (MS) are excised as a propeptide. N-acetylproline is present on Pro3. Lys14 carries the post-translational modification N6,N6,N6-trimethyllysine. Residues Asn123 and Thr173 each contribute to the substrate site. The active-site Proton acceptor is the Lys175. A substrate-binding site is contributed by Lys177. Lys201, Asp203, and Glu204 together coordinate Mg(2+). At Lys201 the chain carries N6-carboxylysine. His294 serves as the catalytic Proton acceptor. 3 residues coordinate substrate: Arg295, His327, and Ser379.

The protein belongs to the RuBisCO large chain family. Type I subfamily. In terms of assembly, heterohexadecamer of 8 large chains and 8 small chains; disulfide-linked. The disulfide link is formed within the large subunit homodimers. Mg(2+) serves as cofactor. The disulfide bond which can form in the large chain dimeric partners within the hexadecamer appears to be associated with oxidative stress and protein turnover.

It localises to the plastid. The protein localises to the chloroplast. It catalyses the reaction 2 (2R)-3-phosphoglycerate + 2 H(+) = D-ribulose 1,5-bisphosphate + CO2 + H2O. The catalysed reaction is D-ribulose 1,5-bisphosphate + O2 = 2-phosphoglycolate + (2R)-3-phosphoglycerate + 2 H(+). Its function is as follows. RuBisCO catalyzes two reactions: the carboxylation of D-ribulose 1,5-bisphosphate, the primary event in carbon dioxide fixation, as well as the oxidative fragmentation of the pentose substrate in the photorespiration process. Both reactions occur simultaneously and in competition at the same active site. This Ostrya virginiana (American hophornbeam) protein is Ribulose bisphosphate carboxylase large chain.